The following is a 473-amino-acid chain: Sun domain-containing protein 1 (473 aa).

A disordered region spans residues 1–47 (MALRHTISPQFSNRHSPPVTRSVSRTGVHQPLDTSTPVTRRDSQPGT). Polar residues predominate over residues 7–47 (ISPQFSNRHSPPVTRSVSRTGVHQPLDTSTPVTRRDSQPGT). Coiled coils occupy residues 163–191 (ISNL…LENV) and 204–235 (EELK…STKI). Residues 237-257 (HSTPEKAPETAPTASLPPSSQ) form a disordered region. Polar residues predominate over residues 248 to 257 (PTASLPPSSQ). The chain crosses the membrane as a helical span at residues 262 to 282 (HITRRALLGVNVANSLIGASI). Residues 279-443 (GASIDHSCSS…YLIRVYGEPV (165 aa)) form the SUN domain. Residues 443–473 (VDPPKETQPMTDNGTESKLESAIVNSVSETA) are disordered.

It localises to the nucleus membrane. The protein resides in the nucleus envelope. In terms of biological role, involved in centrosome attachment to the nucleus. Required for zyg-12 localization to the nuclear envelope. Together with pot-1, it is required to anchor telomeres to the nuclear envelope in embryos. This is Sun domain-containing protein 1 from Caenorhabditis elegans.